Reading from the N-terminus, the 118-residue chain is Aspartate 1-decarboxylase (118 aa).

Catalysis depends on S25, which acts as the Schiff-base intermediate with substrate; via pyruvic acid. S25 carries the post-translational modification Pyruvic acid (Ser). T57 provides a ligand contact to substrate. Y58 functions as the Proton donor in the catalytic mechanism. Substrate is bound at residue 73 to 75; sequence GAA.

Belongs to the PanD family. Heterooctamer of four alpha and four beta subunits. Requires pyruvate as cofactor. Is synthesized initially as an inactive proenzyme, which is activated by self-cleavage at a specific serine bond to produce a beta-subunit with a hydroxyl group at its C-terminus and an alpha-subunit with a pyruvoyl group at its N-terminus.

It localises to the cytoplasm. The enzyme catalyses L-aspartate + H(+) = beta-alanine + CO2. Its pathway is cofactor biosynthesis; (R)-pantothenate biosynthesis; beta-alanine from L-aspartate: step 1/1. Functionally, catalyzes the pyruvoyl-dependent decarboxylation of aspartate to produce beta-alanine. The chain is Aspartate 1-decarboxylase from Phenylobacterium zucineum (strain HLK1).